The sequence spans 368 residues: Chaperone protein DnaJ (368 aa).

The J domain maps to 5 to 70; the sequence is DYYQVLGVPR…KKRKLYDTHG (66 aa). The segment at 124-201 adopts a CR-type zinc-finger fold; sequence GVERQIQIPT…CNGAGRVEDH (78 aa). Zn(2+) contacts are provided by Cys-137, Cys-140, Cys-153, Cys-156, Cys-175, Cys-178, Cys-189, and Cys-192. CXXCXGXG motif repeat units follow at residues 137 to 144, 153 to 160, 175 to 182, and 189 to 196; these read CTHCHGSG, CGTCRGSG, CPHCGGRG, and CKVCNGAG.

This sequence belongs to the DnaJ family. Homodimer. It depends on Zn(2+) as a cofactor.

The protein localises to the cytoplasm. Its function is as follows. Participates actively in the response to hyperosmotic and heat shock by preventing the aggregation of stress-denatured proteins and by disaggregating proteins, also in an autonomous, DnaK-independent fashion. Unfolded proteins bind initially to DnaJ; upon interaction with the DnaJ-bound protein, DnaK hydrolyzes its bound ATP, resulting in the formation of a stable complex. GrpE releases ADP from DnaK; ATP binding to DnaK triggers the release of the substrate protein, thus completing the reaction cycle. Several rounds of ATP-dependent interactions between DnaJ, DnaK and GrpE are required for fully efficient folding. Also involved, together with DnaK and GrpE, in the DNA replication of plasmids through activation of initiation proteins. The protein is Chaperone protein DnaJ of Xylella fastidiosa (strain M23).